The sequence spans 275 residues: MEMO1 family protein Nmar_0215 (275 aa).

This sequence belongs to the MEMO1 family.

The chain is MEMO1 family protein Nmar_0215 from Nitrosopumilus maritimus (strain SCM1).